The following is a 205-amino-acid chain: MSGGDIDPTAINSPKFRLIAVQCLFALTAFATMAGQNKNLAGPDAMTLEECGPYGCGYHKFAVFQFLVVICVTYWLFTMLWMGMYLIQKVPPAGTEFMIYAVFNVLILIAFSTSWTECNETIVDPTYPVCKRATGAKASIAFAMFTWLALCVSMMFTWKEWRDQNYEGLPIFGDFSSFMPGGGGGGMGGGGGYERPSDVNTQTYA.

Residues 1–66 (MSGGDIDPTA…GYHKFAVFQF (66 aa)) lie on the Cytoplasmic side of the membrane. An MARVEL domain is found at 10–162 (AINSPKFRLI…SMMFTWKEWR (153 aa)). Residues 67–87 (LVVICVTYWLFTMLWMGMYLI) form a helical membrane-spanning segment. Over 88 to 90 (QKV) the chain is Extracellular. A helical membrane pass occupies residues 91-111 (PPAGTEFMIYAVFNVLILIAF). The Cytoplasmic segment spans residues 112 to 137 (STSWTECNETIVDPTYPVCKRATGAK). A helical transmembrane segment spans residues 138 to 158 (ASIAFAMFTWLALCVSMMFTW). At 159–167 (KEWRDQNYE) the chain is on the extracellular side. The chain crosses the membrane as a helical span at residues 168–188 (GLPIFGDFSSFMPGGGGGGMG). Topologically, residues 189-205 (GGGGYERPSDVNTQTYA) are cytoplasmic.

Belongs to the Casparian strip membrane proteins (CASP) family. In terms of assembly, homodimer and heterodimers.

Its subcellular location is the cell membrane. The protein is CASP-like protein 0U1 of Micromonas pusilla (strain CCMP1545) (Picoplanktonic green alga).